Here is an 84-residue protein sequence, read N- to C-terminus: ATP synthase subunit c (84 aa).

2 helical membrane-spanning segments follow: residues 1 to 21 (MLAW…ALVG) and 53 to 73 (LLFA…VALI).

It belongs to the ATPase C chain family. In terms of assembly, F-type ATPases have 2 components, F(1) - the catalytic core - and F(0) - the membrane proton channel. F(1) has five subunits: alpha(3), beta(3), gamma(1), delta(1), epsilon(1). F(0) has three main subunits: a(1), b(2) and c(10-14). The alpha and beta chains form an alternating ring which encloses part of the gamma chain. F(1) is attached to F(0) by a central stalk formed by the gamma and epsilon chains, while a peripheral stalk is formed by the delta and b chains.

Its subcellular location is the cell inner membrane. Its function is as follows. F(1)F(0) ATP synthase produces ATP from ADP in the presence of a proton or sodium gradient. F-type ATPases consist of two structural domains, F(1) containing the extramembraneous catalytic core and F(0) containing the membrane proton channel, linked together by a central stalk and a peripheral stalk. During catalysis, ATP synthesis in the catalytic domain of F(1) is coupled via a rotary mechanism of the central stalk subunits to proton translocation. Functionally, key component of the F(0) channel; it plays a direct role in translocation across the membrane. A homomeric c-ring of between 10-14 subunits forms the central stalk rotor element with the F(1) delta and epsilon subunits. This is ATP synthase subunit c from Dictyoglomus thermophilum (strain ATCC 35947 / DSM 3960 / H-6-12).